A 1606-amino-acid polypeptide reads, in one-letter code: E3 ubiquitin-protein ligase HECW1 (1606 aa).

Residues 182–318 (SAAPIFKSIG…LERHAIGDRV (137 aa)) enclose the C2 domain. Disordered regions lie at residues 349-418 (DDEE…PAEE), 459-538 (AEQL…CSLP), 566-672 (LLHS…SCEG), and 730-815 (STVF…SQLP). The span at 354 to 373 (SLSTEPESAQIQDSPMNNLM) shows a compositional bias: polar residues. Residues 380–392 (PRSEAPESSESWK) are compositionally biased toward basic and acidic residues. Acidic residues-rich tracts occupy residues 500-511 (EEEEKEQEEEGD) and 579-588 (AEEEDGAEEE). Residues 589 to 600 (STLKDSSEKDGL) show a composition bias toward basic and acidic residues. Acidic residues predominate over residues 612–621 (ALEEDREEPE). 3 stretches are compositionally biased toward polar residues: residues 651 to 663 (HPSTGSESDSSPR), 751 to 765 (DSMQSPELDPESTNG), and 806 to 815 (HNSQPVSQLP). In terms of domain architecture, WW 1 spans 829–862 (EPLPPNWEARIDSHGRVFYVDHVNRTTTWQRPTA). Residues 870–901 (RRSGSIQQMEQLNRRYQNIQRTIATERSEEDS) are a coiled coil. Phosphoserine is present on residues serine 874, serine 937, and serine 939. Residues 894-938 (TERSEEDSGSQSCEQAPAGGGGGGGSDSEAESSQSSLDLRREGSL) are disordered. The 34-residue stretch at 1018–1051 (LELPRGWEIKTDQQGKSFFVDHNSRATTFIDPRI) folds into the WW 2 domain. Residues 1271–1606 (SRKELQRNKL…VEETSTFGLE (336 aa)) form the HECT domain. Catalysis depends on cysteine 1574, which acts as the Glycyl thioester intermediate.

As to quaternary structure, interacts with DVL1 and SSR3. Also interacts with mutant SOD1. In terms of tissue distribution, predominantly expressed in neurons of adult and fetal brain. Weakly expressed in the kidney.

It localises to the cytoplasm. It catalyses the reaction S-ubiquitinyl-[E2 ubiquitin-conjugating enzyme]-L-cysteine + [acceptor protein]-L-lysine = [E2 ubiquitin-conjugating enzyme]-L-cysteine + N(6)-ubiquitinyl-[acceptor protein]-L-lysine.. It functions in the pathway protein modification; protein ubiquitination. Its function is as follows. E3 ubiquitin-protein ligase that mediates ubiquitination and subsequent degradation of DVL1. Also targets the mutant SOD1 protein involved in familial amyotrophic lateral sclerosis (FALS). Forms cytotoxic aggregates with DVL1, SSR3 and mutant SOD1 that lead to motor neuron death in FALS. In Homo sapiens (Human), this protein is E3 ubiquitin-protein ligase HECW1 (HECW1).